A 118-amino-acid chain; its full sequence is UPF0212 protein HQ_2663A (118 aa).

It belongs to the UPF0212 family.

This chain is UPF0212 protein HQ_2663A, found in Haloquadratum walsbyi (strain DSM 16790 / HBSQ001).